The sequence spans 269 residues: Sulfur carrier protein FdhD (269 aa).

Cys-111 functions as the Cysteine persulfide intermediate in the catalytic mechanism.

The protein belongs to the FdhD family.

The protein localises to the cytoplasm. Its function is as follows. Required for formate dehydrogenase (FDH) activity. Acts as a sulfur carrier protein that transfers sulfur from IscS to the molybdenum cofactor prior to its insertion into FDH. This chain is Sulfur carrier protein FdhD, found in Brucella abortus biovar 1 (strain 9-941).